Here is a 238-residue protein sequence, read N- to C-terminus: Large ribosomal subunit protein uL2 (238 aa).

Disordered regions lie at residues 1-34 and 197-238; these read MGKR…PPLS and VDHP…RRKR. The span at 224–238 shows a compositional bias: basic residues; sequence KVGHIAARRTGRRKR.

This sequence belongs to the universal ribosomal protein uL2 family. As to quaternary structure, part of the 50S ribosomal subunit. Forms a bridge to the 30S subunit in the 70S ribosome.

Functionally, one of the primary rRNA binding proteins. Required for association of the 30S and 50S subunits to form the 70S ribosome, for tRNA binding and peptide bond formation. It has been suggested to have peptidyltransferase activity; this is somewhat controversial. Makes several contacts with the 16S rRNA in the 70S ribosome. The polypeptide is Large ribosomal subunit protein uL2 (Aeropyrum pernix (strain ATCC 700893 / DSM 11879 / JCM 9820 / NBRC 100138 / K1)).